A 135-amino-acid polypeptide reads, in one-letter code: ATP synthase epsilon chain (135 aa).

The disordered stretch occupies residues 91–122; sequence EAQKQLSEAEQAWSKFDGQPNSPDKIKAQQAF.

The protein belongs to the ATPase epsilon chain family. As to quaternary structure, F-type ATPases have 2 components, CF(1) - the catalytic core - and CF(0) - the membrane proton channel. CF(1) has five subunits: alpha(3), beta(3), gamma(1), delta(1), epsilon(1). CF(0) has three main subunits: a, b and c.

The protein resides in the cellular thylakoid membrane. Functionally, produces ATP from ADP in the presence of a proton gradient across the membrane. In Synechococcus sp. (strain RCC307), this protein is ATP synthase epsilon chain.